A 1378-amino-acid chain; its full sequence is S-cell enriched with leucine-rich repeat-containing protein slrA (1378 aa).

A helical transmembrane segment spans residues 17–37; the sequence is IFKILYCYLFTSLLLILSTWV. 5 N-linked (GlcNAc...) asparagine glycosylation sites follow: Asn59, Asn112, Asn143, Asn172, and Asn201. 9 LRR repeats span residues 143–165, 167–188, 191–212, 213–235, 236–257, 260–281, 282–304, 307–329, and 331–353; these read NLTGIDLSNNNLKGNITPYLPYL, HLRNLNLSNNHLSGCFPDGLLK, SLVALDLSYNNISCTLSLADSK, AISYIDISHNHLTGYFKNVWKTP, NLLFLDLSFNKLYGTILKEFFR, SLDYVNLSSNQLIGFLPILSKS, RISYLNISNNRLIGNITLLTCWK, SLRIFDAENNMFEGALPESIFDH, and PLQYVNLKGNIVKDPLPSILDCA. Asn265, Asn287, and Asn296 each carry an N-linked (GlcNAc...) asparagine glycan. Residues Asn416, Asn436, Asn451, Asn491, Asn513, Asn596, Asn605, Asn634, Asn704, Asn710, Asn740, Asn741, Asn771, Asn788, Asn801, Asn826, Asn843, Asn861, Asn875, and Asn907 are each glycosylated (N-linked (GlcNAc...) asparagine). Residues 886 to 946 adopt a coiled-coil conformation; it reads SLNNNNNNNN…NNNENNNENK (61 aa). A compositionally biased stretch (low complexity) spans 891–909; that stretch reads NNNNNNNNNKNNNNNNNDS. A disordered region spans residues 891–945; the sequence is NNNNNNNNNKNNNNNNNDSNNEKEVVEDEEEDLDYSSQNDNNNINNNNNENNNEN. The span at 915-924 shows a compositional bias: acidic residues; that stretch reads VVEDEEEDLD. Positions 929–945 are enriched in low complexity; it reads NDNNNINNNNNENNNEN. N-linked (GlcNAc...) asparagine glycosylation is found at Asn953, Asn970, Asn1090, and Asn1100. Residues 1160–1180 form a helical membrane-spanning segment; the sequence is YYIVFFGCASGLILVLVICIV. The segment covering 1227–1276 has biased composition (low complexity); that stretch reads DLNNNNNNNNNNNNNNNNNNNNNNNNNNNNNNNNNFNDGSDTFNNNNKKN. Residues 1227-1378 form a disordered region; it reads DLNNNNNNNN…KKHLTIINKK (152 aa). The segment covering 1289-1304 has biased composition (basic and acidic residues); sequence DGKENDIKNINNKKDE. Over residues 1305 to 1324 the composition is skewed to acidic residues; the sequence is KEDDGDDDDDEDDDEYEDDT. Residues 1328–1353 are compositionally biased toward low complexity; the sequence is SSGNSSRSKGSDGGSSSNSLSSDKQS. N-linked (GlcNAc...) asparagine glycosylation is found at Asn1331 and Asn1360. The segment covering 1354–1364 has biased composition (polar residues); the sequence is FNNGNENNSII. Basic residues predominate over residues 1368 to 1378; the sequence is KKKHLTIINKK.

It is found in the membrane. In Dictyostelium discoideum (Social amoeba), this protein is S-cell enriched with leucine-rich repeat-containing protein slrA (slrA).